We begin with the raw amino-acid sequence, 1026 residues long: Multidrug resistance protein MdtC (1026 aa).

Helical transmembrane passes span 15–35 (ILIA…LPVA), 333–353 (EVEE…FLFL), 360–380 (LIPA…MYLC), 387–407 (LSLM…IVVL), 431–451 (VGFT…PLLL), 463–483 (FAVT…TLTP), 528–548 (LVGV…IAIP), 853–873 (LILI…LYES), 897–917 (LFNA…IGIV), 953–973 (PIMM…LSGG), and 984–1004 (ITIV…TPVV).

This sequence belongs to the resistance-nodulation-cell division (RND) (TC 2.A.6) family. MdtC subfamily. As to quaternary structure, part of a tripartite efflux system composed of MdtA, MdtB and MdtC. MdtC forms a heteromultimer with MdtB.

It is found in the cell inner membrane. The sequence is that of Multidrug resistance protein MdtC from Salmonella paratyphi A (strain AKU_12601).